The chain runs to 238 residues: NAD(P)H-quinone oxidoreductase subunit K 1 (238 aa).

The [4Fe-4S] cluster site is built by C54, C55, C119, and C150.

The protein belongs to the complex I 20 kDa subunit family. In terms of assembly, NDH-1 can be composed of about 15 different subunits; different subcomplexes with different compositions have been identified which probably have different functions. [4Fe-4S] cluster serves as cofactor.

It localises to the cellular thylakoid membrane. It carries out the reaction a plastoquinone + NADH + (n+1) H(+)(in) = a plastoquinol + NAD(+) + n H(+)(out). The catalysed reaction is a plastoquinone + NADPH + (n+1) H(+)(in) = a plastoquinol + NADP(+) + n H(+)(out). Its function is as follows. NDH-1 shuttles electrons from an unknown electron donor, via FMN and iron-sulfur (Fe-S) centers, to quinones in the respiratory and/or the photosynthetic chain. The immediate electron acceptor for the enzyme in this species is believed to be plastoquinone. Couples the redox reaction to proton translocation, and thus conserves the redox energy in a proton gradient. Cyanobacterial NDH-1 also plays a role in inorganic carbon-concentration. This chain is NAD(P)H-quinone oxidoreductase subunit K 1, found in Cyanothece sp. (strain PCC 7425 / ATCC 29141).